Consider the following 544-residue polypeptide: GMP synthase [glutamine-hydrolyzing] (544 aa).

Residues 12 to 210 enclose the Glutamine amidotransferase type-1 domain; it reads TILILDFGSQ…VKNVCSVRDG (199 aa). Cys88 acts as the Nucleophile in catalysis. Residues His184 and Glu186 contribute to the active site. The region spanning 211-419 is the GMPS ATP-PPase domain; it reads WSMESFIPKE…LNIPEHLVGR (209 aa). Position 239-245 (239-245) interacts with ATP; it reads SGGVDST. The XMP site is built by Arg312, Asp481, Lys536, and Glu542.

As to quaternary structure, homodimer. Also forms a small population of homotetramers. Requires Mg(2+) as cofactor.

It is found in the cytoplasm. The protein localises to the cytosol. The enzyme catalyses XMP + L-glutamine + ATP + H2O = GMP + L-glutamate + AMP + diphosphate + 2 H(+). Its pathway is purine metabolism; GMP biosynthesis; GMP from XMP (L-Gln route): step 1/1. Functionally, catalyzes the conversion of xanthine monophosphate (XMP) to GMP in the presence of glutamine and ATP through an adenyl-XMP intermediate. This Cryptococcus neoformans var. neoformans serotype D (strain JEC21 / ATCC MYA-565) (Filobasidiella neoformans) protein is GMP synthase [glutamine-hydrolyzing].